The following is a 124-amino-acid chain: Small ribosomal subunit protein uS12 (124 aa).

Residues 1–29 (MPTINQLVRRPRRPRESANKAPALQHNPQ) form a disordered region. D90 is modified (3-methylthioaspartic acid).

Belongs to the universal ribosomal protein uS12 family. In terms of assembly, part of the 30S ribosomal subunit. Contacts proteins S8 and S17. May interact with IF1 in the 30S initiation complex.

With S4 and S5 plays an important role in translational accuracy. Its function is as follows. Interacts with and stabilizes bases of the 16S rRNA that are involved in tRNA selection in the A site and with the mRNA backbone. Located at the interface of the 30S and 50S subunits, it traverses the body of the 30S subunit contacting proteins on the other side and probably holding the rRNA structure together. The combined cluster of proteins S8, S12 and S17 appears to hold together the shoulder and platform of the 30S subunit. The chain is Small ribosomal subunit protein uS12 from Anaplasma marginale (strain Florida).